The chain runs to 285 residues: NADPH-dependent 7-cyano-7-deazaguanine reductase (285 aa).

Residue 91 to 93 (IES) coordinates substrate. Position 93-94 (93-94 (SK)) interacts with NADPH. Residue Cys-192 is the Thioimide intermediate of the active site. Asp-199 serves as the catalytic Proton donor. Residue 231 to 232 (HE) participates in substrate binding. 260 to 261 (RG) lines the NADPH pocket.

It belongs to the GTP cyclohydrolase I family. QueF type 2 subfamily. In terms of assembly, homodimer.

It localises to the cytoplasm. The enzyme catalyses 7-aminomethyl-7-carbaguanine + 2 NADP(+) = 7-cyano-7-deazaguanine + 2 NADPH + 3 H(+). It functions in the pathway tRNA modification; tRNA-queuosine biosynthesis. In terms of biological role, catalyzes the NADPH-dependent reduction of 7-cyano-7-deazaguanine (preQ0) to 7-aminomethyl-7-deazaguanine (preQ1). This Psychromonas ingrahamii (strain DSM 17664 / CCUG 51855 / 37) protein is NADPH-dependent 7-cyano-7-deazaguanine reductase.